Reading from the N-terminus, the 276-residue chain is Putative phosphoenolpyruvate synthase regulatory protein (276 aa).

An ADP-binding site is contributed by 156 to 163 (GVSRSGKT).

It belongs to the pyruvate, phosphate/water dikinase regulatory protein family. PSRP subfamily.

It carries out the reaction [pyruvate, water dikinase] + ADP = [pyruvate, water dikinase]-phosphate + AMP + H(+). It catalyses the reaction [pyruvate, water dikinase]-phosphate + phosphate + H(+) = [pyruvate, water dikinase] + diphosphate. Its function is as follows. Bifunctional serine/threonine kinase and phosphorylase involved in the regulation of the phosphoenolpyruvate synthase (PEPS) by catalyzing its phosphorylation/dephosphorylation. In Acidovorax ebreus (strain TPSY) (Diaphorobacter sp. (strain TPSY)), this protein is Putative phosphoenolpyruvate synthase regulatory protein.